Consider the following 225-residue polypeptide: NAD(P)H-quinone oxidoreductase subunit K, chloroplastic (225 aa).

[4Fe-4S] cluster-binding residues include Cys43, Cys44, Cys108, and Cys139.

This sequence belongs to the complex I 20 kDa subunit family. As to quaternary structure, NDH is composed of at least 16 different subunits, 5 of which are encoded in the nucleus. It depends on [4Fe-4S] cluster as a cofactor.

It localises to the plastid. The protein localises to the chloroplast thylakoid membrane. The enzyme catalyses a plastoquinone + NADH + (n+1) H(+)(in) = a plastoquinol + NAD(+) + n H(+)(out). It catalyses the reaction a plastoquinone + NADPH + (n+1) H(+)(in) = a plastoquinol + NADP(+) + n H(+)(out). NDH shuttles electrons from NAD(P)H:plastoquinone, via FMN and iron-sulfur (Fe-S) centers, to quinones in the photosynthetic chain and possibly in a chloroplast respiratory chain. The immediate electron acceptor for the enzyme in this species is believed to be plastoquinone. Couples the redox reaction to proton translocation, and thus conserves the redox energy in a proton gradient. This Gossypium barbadense (Sea Island cotton) protein is NAD(P)H-quinone oxidoreductase subunit K, chloroplastic.